We begin with the raw amino-acid sequence, 219 residues long: Ribose-5-phosphate isomerase A (219 aa).

Residues 28–31, 81–84, and 94–97 each bind substrate; these read TGST, DGAD, and KGGG. The active-site Proton acceptor is glutamate 103. Residue lysine 121 coordinates substrate.

The protein belongs to the ribose 5-phosphate isomerase family. Homodimer.

It catalyses the reaction aldehydo-D-ribose 5-phosphate = D-ribulose 5-phosphate. It participates in carbohydrate degradation; pentose phosphate pathway; D-ribose 5-phosphate from D-ribulose 5-phosphate (non-oxidative stage): step 1/1. Catalyzes the reversible conversion of ribose-5-phosphate to ribulose 5-phosphate. This Shewanella loihica (strain ATCC BAA-1088 / PV-4) protein is Ribose-5-phosphate isomerase A.